A 383-amino-acid polypeptide reads, in one-letter code: Na(+)/H(+) antiporter NhaA (383 aa).

The next 11 membrane-spanning stretches (helical) occupy residues 10–30 (LIGGLILFSAALLAIVVNNSP), 56–76 (LMHWINDGLMAIYFLYIGLEI), 91–111 (IITPAIAAFAGLAMPSLIYLS), 121–141 (GWAIPSATDIAFTLGILALLG), 150–170 (LLVITIAIFDDIAAIAIIAIF), 174–194 (SLSLLSLSLGTLFILAMIICN), 206–226 (VVLGFFAWFCTIKSGVHATLA), 254–274 (PWIIYFILPVFAFANAGISFS), 289–308 (IIWGLFVGKQLGIFSILAVF), 327–347 (GISLLCGIGFTMSLFIGVLAF), and 355–375 (AIKIGVVVGSVLSGFFGYIVL).

This sequence belongs to the NhaA Na(+)/H(+) (TC 2.A.33) antiporter family.

It localises to the cell inner membrane. The enzyme catalyses Na(+)(in) + 2 H(+)(out) = Na(+)(out) + 2 H(+)(in). Na(+)/H(+) antiporter that extrudes sodium in exchange for external protons. The polypeptide is Na(+)/H(+) antiporter NhaA (Francisella tularensis subsp. mediasiatica (strain FSC147)).